The primary structure comprises 895 residues: Catenin alpha-3 (895 aa).

Phosphoserine is present on Ser-56. Residues Glu-74–Asp-111 adopt a coiled-coil conformation. Position 160 is a phosphoserine (Ser-160). Positions Arg-325 to Lys-379 form a coiled coil. Residues Ser-637 and Ser-647 each carry the phosphoserine modification. The residue at position 649 (Thr-649) is a Phosphothreonine.

This sequence belongs to the vinculin/alpha-catenin family. As to quaternary structure, interacts with CTNNB1. Interacts with PKP2. In terms of tissue distribution, predominantly expressed in heart and testis. Expressed at lower levels in brain, kidney, liver and skeletal muscle.

It localises to the cytoplasm. It is found in the cytoskeleton. The protein resides in the cell junction. The protein localises to the desmosome. Functionally, may be involved in formation of stretch-resistant cell-cell adhesion complexes. The polypeptide is Catenin alpha-3 (Homo sapiens (Human)).